Here is a 116-residue protein sequence, read N- to C-terminus: Somatostatin (116 aa).

Positions 1-24 (MLSCRLQCALAALSIVLALGGVTG) are cleaved as a signal peptide. The propeptide occupies 25 to 88 (APSDPRLRQF…QDEMRLELQR (64 aa)). At Ala43 the chain carries Alanine amide. Cys105 and Cys116 are disulfide-bonded.

Belongs to the somatostatin family. Post-translationally, C-terminal amidation of the neuronostatin peptide is required for its biological activity, including for the regulation of mean arterial pressure.

The protein resides in the secreted. Functionally, inhibits the secretion of pituitary hormones, including that of growth hormone/somatotropin (GH1), PRL, ACTH, luteinizing hormone (LH) and TSH. Also impairs ghrelin- and GnRH-stimulated secretion of GH1 and LH; the inhibition of ghrelin-stimulated secretion of GH1 can be further increased by neuronostatin. In terms of biological role, may enhance low-glucose-induced glucagon release by pancreatic alpha cells. This effect may be mediated by binding to GPR107 and PKA activation. May regulate cardiac contractile function. May compromise cardiomyocyte viability. In the central nervous system, may impair memory retention and may affect hippocampal excitability. May also have anxiolytic and anorexigenic effects. May play a role in arterial pressure regulation. May inhibit basal, but not ghrelin- or GnRH-stimulated secretion of GH1 or LH, but does not affect the release of other pituitary hormones, including PRL, ACTH, FSH or TSH. Potentiates inhibitory action of somatostatin on ghrelin-stimulated secretion of GH1, but not that on GnRH-stimulated secretion of LH. The polypeptide is Somatostatin (SST) (Bos taurus (Bovine)).